Consider the following 713-residue polypeptide: Endopolyphosphatase (713 aa).

The Cytoplasmic portion of the chain corresponds to 1–19 (MSVLIDEKSHRSSGSTRSR). Residues 20–40 (IVVTVVGVLLMVSGLAVMLGH) traverse the membrane as a helical; Signal-anchor for type II membrane protein segment. At 41-713 (QSGSANEALG…SSEYENMGMG (673 aa)) the chain is on the vacuolar side. The span at 399-418 (SDDDDNSDSDSDDDDEDTSL) shows a compositional bias: acidic residues. The tract at residues 399 to 430 (SDDDDNSDSDSDDDDEDTSLEESYSNFNSPIL) is disordered. N-linked (GlcNAc...) asparagine glycans are attached at residues N507 and N645. Over residues 640 to 659 (VKEKKNKSNKKSKKKKKNKD) the composition is skewed to basic residues. Residues 640–684 (VKEKKNKSNKKSKKKKKNKDKRLLENSEPLKQDGSKDSRLEQDRV) are disordered. Over residues 660-683 (KRLLENSEPLKQDGSKDSRLEQDR) the composition is skewed to basic and acidic residues.

This sequence belongs to the endopolyphosphatase PPN1 family. Requires a divalent metal cation as cofactor. In terms of processing, processing by proteases in the vacuole may be required for activation.

It localises to the vacuole membrane. It catalyses the reaction [phosphate](n+1) + n H2O = (n+1) phosphate + n H(+). Catalyzes the hydrolysis of inorganic polyphosphate (polyP) chains of many hundreds of phosphate residues into shorter lengths. The sequence is that of Endopolyphosphatase (PPN1) from Debaryomyces hansenii (strain ATCC 36239 / CBS 767 / BCRC 21394 / JCM 1990 / NBRC 0083 / IGC 2968) (Yeast).